Consider the following 234-residue polypeptide: uncharacterized protein (234 aa).

2 disordered regions span residues methionine 1 to proline 65 and alanine 182 to threonine 234.

This is an uncharacterized protein from Homo sapiens (Human).